The primary structure comprises 176 residues: 3-hydroxyacyl-[acyl-carrier-protein] dehydratase FabZ (176 aa).

Residue His54 is part of the active site.

This sequence belongs to the thioester dehydratase family. FabZ subfamily.

It is found in the cytoplasm. It catalyses the reaction a (3R)-hydroxyacyl-[ACP] = a (2E)-enoyl-[ACP] + H2O. Involved in unsaturated fatty acids biosynthesis. Catalyzes the dehydration of short chain beta-hydroxyacyl-ACPs and long chain saturated and unsaturated beta-hydroxyacyl-ACPs. The chain is 3-hydroxyacyl-[acyl-carrier-protein] dehydratase FabZ from Yersinia pseudotuberculosis serotype O:1b (strain IP 31758).